The following is a 549-amino-acid chain: Cell pattern formation-associated protein StuA (549 aa).

The region spanning 86-192 is the HTH APSES-type domain; sequence RVTATLWEDE…HNIGALLYHP (107 aa). The H-T-H motif DNA-binding region spans 120–141; it reads GTKLLNVAGMTRGRRDGILKSE. Disordered stretches follow at residues 205 to 227, 246 to 288, 332 to 466, and 514 to 549; these read AERR…LPSI, SLAN…DLHR, REED…DHLN, and ASTV…QSFG. A compositionally biased stretch (polar residues) spans 246-266; sequence SLANGPQSLASTPQPLANGSQ. 3 stretches are compositionally biased toward basic and acidic residues: residues 278-288, 332-346, and 385-395; these read RGREEEEDLHR, REED…HNAH, and RGRDEDDDHRS. The interval 516–545 is nuclear localization domain; the sequence is TVAASPSYPSAPVYDTAARPPSAISAPRRQ. Residues 532-549 are compositionally biased toward low complexity; that stretch reads AARPPSAISAPRRQQSFG.

The protein belongs to the EFG1/PHD1/stuA family.

It localises to the nucleus. Its function is as follows. Transcription factor that regulates asexual reproduction. Binds the StuA-response elements (StRE) with the consensus sequence 5'-(A/T)CGCG(T/A)N(A/C)-3' at the promoters of target genes. This chain is Cell pattern formation-associated protein StuA, found in Gibberella moniliformis (strain M3125 / FGSC 7600) (Maize ear and stalk rot fungus).